The following is a 152-amino-acid chain: UPF0178 protein Shewmr7_1635 (152 aa).

This sequence belongs to the UPF0178 family.

The sequence is that of UPF0178 protein Shewmr7_1635 from Shewanella sp. (strain MR-7).